Here is a 386-residue protein sequence, read N- to C-terminus: Arginine biosynthesis bifunctional protein ArgJ (386 aa).

Residues Thr-148, Lys-170, Thr-181, Glu-261, Asn-381, and Ser-386 each contribute to the substrate site. Thr-181 (nucleophile) is an active-site residue.

Belongs to the ArgJ family. In terms of assembly, heterotetramer of two alpha and two beta chains.

It is found in the cytoplasm. It carries out the reaction N(2)-acetyl-L-ornithine + L-glutamate = N-acetyl-L-glutamate + L-ornithine. It catalyses the reaction L-glutamate + acetyl-CoA = N-acetyl-L-glutamate + CoA + H(+). Its pathway is amino-acid biosynthesis; L-arginine biosynthesis; L-ornithine and N-acetyl-L-glutamate from L-glutamate and N(2)-acetyl-L-ornithine (cyclic): step 1/1. It participates in amino-acid biosynthesis; L-arginine biosynthesis; N(2)-acetyl-L-ornithine from L-glutamate: step 1/4. In terms of biological role, catalyzes two activities which are involved in the cyclic version of arginine biosynthesis: the synthesis of N-acetylglutamate from glutamate and acetyl-CoA as the acetyl donor, and of ornithine by transacetylation between N(2)-acetylornithine and glutamate. The chain is Arginine biosynthesis bifunctional protein ArgJ from Corynebacterium diphtheriae (strain ATCC 700971 / NCTC 13129 / Biotype gravis).